A 295-amino-acid polypeptide reads, in one-letter code: Virginiamycin B lyase (295 aa).

Residue His-227 coordinates substrate. Glu-267 lines the Mg(2+) pocket. His-269 (proton acceptor) is an active-site residue. Residue Glu-284 participates in Mg(2+) binding.

It belongs to the Vgb family. As to quaternary structure, monomer. Mg(2+) is required as a cofactor.

Functionally, inactivates the type B streptogramin antibiotics by linearizing the lactone ring at the ester linkage, generating a free phenylglycine carboxylate and converting the threonyl moiety into 2-amino-butenoic acid. The chain is Virginiamycin B lyase from Bacillus licheniformis (strain ATCC 14580 / DSM 13 / JCM 2505 / CCUG 7422 / NBRC 12200 / NCIMB 9375 / NCTC 10341 / NRRL NRS-1264 / Gibson 46).